The chain runs to 147 residues: D-aminoacyl-tRNA deacylase (147 aa).

Residues 137–138 carry the Gly-cisPro motif, important for rejection of L-amino acids motif; that stretch reads GP.

It belongs to the DTD family. As to quaternary structure, homodimer.

Its subcellular location is the cytoplasm. The enzyme catalyses glycyl-tRNA(Ala) + H2O = tRNA(Ala) + glycine + H(+). It carries out the reaction a D-aminoacyl-tRNA + H2O = a tRNA + a D-alpha-amino acid + H(+). An aminoacyl-tRNA editing enzyme that deacylates mischarged D-aminoacyl-tRNAs. Also deacylates mischarged glycyl-tRNA(Ala), protecting cells against glycine mischarging by AlaRS. Acts via tRNA-based rather than protein-based catalysis; rejects L-amino acids rather than detecting D-amino acids in the active site. By recycling D-aminoacyl-tRNA to D-amino acids and free tRNA molecules, this enzyme counteracts the toxicity associated with the formation of D-aminoacyl-tRNA entities in vivo and helps enforce protein L-homochirality. The sequence is that of D-aminoacyl-tRNA deacylase from Acinetobacter baumannii (strain AYE).